A 399-amino-acid polypeptide reads, in one-letter code: Leu/Ile/Val-binding protein homolog 7 (399 aa).

A signal peptide spans 1–22 (MEKHLIALSVAALLAGAAPASA).

This sequence belongs to the leucine-binding protein family.

Its function is as follows. Component of an amino-acid transport system. This is Leu/Ile/Val-binding protein homolog 7 from Brucella melitensis biotype 1 (strain ATCC 23456 / CCUG 17765 / NCTC 10094 / 16M).